The primary structure comprises 638 residues: Chaperone protein DnaK (638 aa).

Phosphothreonine; by autocatalysis is present on Thr-198. The tract at residues 600–638 (KTQTEGGAQPGAEADGDTGAKGGEKVVDADFEEVKDDKK) is disordered. The segment covering 628–638 (ADFEEVKDDKK) has biased composition (acidic residues).

This sequence belongs to the heat shock protein 70 family.

Functionally, acts as a chaperone. In Geobacter metallireducens (strain ATCC 53774 / DSM 7210 / GS-15), this protein is Chaperone protein DnaK.